Reading from the N-terminus, the 193-residue chain is dCTP deaminase (193 aa).

DCTP-binding positions include 110 to 115 (RSSLAR), aspartate 128, 136 to 138 (VLE), tyrosine 171, lysine 178, and glutamine 182. Catalysis depends on glutamate 138, which acts as the Proton donor/acceptor. The segment at 169–193 (RPYNRREDAKYRNQQGAVASRIDKD) is disordered.

It belongs to the dCTP deaminase family. In terms of assembly, homotrimer.

It carries out the reaction dCTP + H2O + H(+) = dUTP + NH4(+). It participates in pyrimidine metabolism; dUMP biosynthesis; dUMP from dCTP (dUTP route): step 1/2. Functionally, catalyzes the deamination of dCTP to dUTP. This chain is dCTP deaminase, found in Escherichia coli O8 (strain IAI1).